Here is a 1171-residue protein sequence, read N- to C-terminus: ATP-dependent helicase/deoxyribonuclease subunit B (1171 aa).

Residues 1–390 form the UvrD-like helicase ATP-binding domain; that stretch reads MSLRFVIGRA…HPLVECIRSA (390 aa). 8-15 is an ATP binding site; the sequence is GRAGSGKS. The UvrD-like helicase C-terminal domain occupies 281–587; that stretch reads MEQPRFHSPA…QFANIPPSLD (307 aa). 4 residues coordinate [4Fe-4S] cluster: C805, C1129, C1132, and C1138.

Belongs to the helicase family. AddB/RexB type 1 subfamily. As to quaternary structure, heterodimer of AddA and AddB. Requires Mg(2+) as cofactor. [4Fe-4S] cluster serves as cofactor.

Its function is as follows. The heterodimer acts as both an ATP-dependent DNA helicase and an ATP-dependent, dual-direction single-stranded exonuclease. Recognizes the chi site generating a DNA molecule suitable for the initiation of homologous recombination. The AddB subunit has 5' -&gt; 3' nuclease activity but not helicase activity. In Bacillus cereus (strain B4264), this protein is ATP-dependent helicase/deoxyribonuclease subunit B.